The sequence spans 318 residues: Mitochondrial coenzyme A transporter SLC25A42 (318 aa).

3 Solcar repeats span residues 31-117 (RQVL…YKRI), 129-214 (LPPW…LKSL), and 224-312 (PYPF…MQIL). The next 6 helical transmembrane spans lie at 33–53 (VLSSLLSGALAGALAKTAVAP), 89–109 (LWRGNSATMVRVIPYAAIQFS), 135–155 (LLAGALAGTTAASLTYPLDLV), 186–206 (LYFGFTPTVLGVIPYAGLSFF), 230–250 (MVFGACAGLIGQSASYPLDVV), and 293–313 (LKGPIAVGISFTTFDLMQILL).

It belongs to the mitochondrial carrier (TC 2.A.29) family. As to expression, widely expressed. Highly expressed in adipose, followed by hypothalamus and brain coronal sections containing corpus callosum, fornix, thalamus, hypothalamus, optic chiasm, pons, midbrain, and cerebellum.

The protein localises to the mitochondrion inner membrane. The catalysed reaction is ADP(out) + CoA(in) = ADP(in) + CoA(out). It catalyses the reaction 3'-dephospho-CoA(in) + ADP(out) = 3'-dephospho-CoA(out) + ADP(in). The enzyme catalyses adenosine 3',5'-bisphosphate(in) + ADP(out) = adenosine 3',5'-bisphosphate(out) + ADP(in). It carries out the reaction AMP(in) + ADP(out) = AMP(out) + ADP(in). The catalysed reaction is dADP(in) + ADP(out) = dADP(out) + ADP(in). It catalyses the reaction ADP(in) + ATP(out) = ADP(out) + ATP(in). Mitochondrial carrier mediating the transport of coenzyme A (CoA) in mitochondria in exchange for intramitochondrial (deoxy)adenine nucleotides and adenosine 3',5'-diphosphate. The sequence is that of Mitochondrial coenzyme A transporter SLC25A42 (Slc25a42) from Rattus norvegicus (Rat).